We begin with the raw amino-acid sequence, 275 residues long: Small ribosomal subunit protein uS3 (275 aa).

The 69-residue stretch at 38–106 folds into the KH type-2 domain; sequence IRRMMTSGME…QVQLNILEVK (69 aa). Residues 216–228 are compositionally biased toward low complexity; it reads NAAARAGNRPARG. The tract at residues 216 to 275 is disordered; it reads NAAARAGNRPARGGADRPARGGRGGERGGRGRKPQQAPAAEAPKAEAPAAAPAESTGTEA. Residues 229–244 show a composition bias toward basic and acidic residues; the sequence is GADRPARGGRGGERGG. Low complexity predominate over residues 249–268; it reads PQQAPAAEAPKAEAPAAAPA.

The protein belongs to the universal ribosomal protein uS3 family. Part of the 30S ribosomal subunit. Forms a tight complex with proteins S10 and S14.

Functionally, binds the lower part of the 30S subunit head. Binds mRNA in the 70S ribosome, positioning it for translation. The protein is Small ribosomal subunit protein uS3 of Streptomyces avermitilis (strain ATCC 31267 / DSM 46492 / JCM 5070 / NBRC 14893 / NCIMB 12804 / NRRL 8165 / MA-4680).